Reading from the N-terminus, the 187-residue chain is Ribosome-recycling factor (187 aa).

It belongs to the RRF family.

The protein resides in the cytoplasm. In terms of biological role, responsible for the release of ribosomes from messenger RNA at the termination of protein biosynthesis. May increase the efficiency of translation by recycling ribosomes from one round of translation to another. The protein is Ribosome-recycling factor of Rhodopseudomonas palustris (strain HaA2).